The primary structure comprises 143 residues: Transcriptional regulator MraZ (143 aa).

SpoVT-AbrB domains follow at residues 5-47 and 76-119; these read EFRH…PMNE and ASEC…SQEK.

It belongs to the MraZ family. Forms oligomers.

The protein resides in the cytoplasm. It is found in the nucleoid. This is Transcriptional regulator MraZ from Natranaerobius thermophilus (strain ATCC BAA-1301 / DSM 18059 / JW/NM-WN-LF).